A 258-amino-acid chain; its full sequence is Phosphate import ATP-binding protein PstB 1 (258 aa).

Residues 5 to 247 (LDLTDVNIYY…EKIFSNPNQK (243 aa)) enclose the ABC transporter domain. 37 to 44 (GPSGCGKT) lines the ATP pocket.

It belongs to the ABC transporter superfamily. Phosphate importer (TC 3.A.1.7) family. As to quaternary structure, the complex is composed of two ATP-binding proteins (PstB), two transmembrane proteins (PstC and PstA) and a solute-binding protein (PstS).

The protein resides in the cell membrane. The catalysed reaction is phosphate(out) + ATP + H2O = ADP + 2 phosphate(in) + H(+). Functionally, part of the ABC transporter complex PstSACB involved in phosphate import. Responsible for energy coupling to the transport system. The protein is Phosphate import ATP-binding protein PstB 1 of Mycobacterium tuberculosis (strain CDC 1551 / Oshkosh).